Here is a 265-residue protein sequence, read N- to C-terminus: Mlc titration factor A (265 aa).

The Zn(2+) site is built by His-111, His-148, His-152, and Glu-211.

Belongs to the MtfA family. In terms of assembly, interacts with Mlc. The cofactor is Zn(2+).

The protein localises to the cytoplasm. In terms of biological role, involved in the modulation of the activity of the glucose-phosphotransferase system (glucose-PTS). Interacts with the transcriptional repressor Mlc, preventing its interaction with DNA and leading to the modulation of expression of genes regulated by Mlc, including ptsG, which encodes the PTS system glucose-specific EIICB component. Shows zinc-dependent metallopeptidase activity. This chain is Mlc titration factor A, found in Salmonella gallinarum (strain 287/91 / NCTC 13346).